A 348-amino-acid chain; its full sequence is Rhodopsin (348 aa).

Topologically, residues 1 to 33 are extracellular; sequence TEGPYFYIPMVNTTGIVRSPYEYPQYYLVNPAA. An N-linked (GlcNAc...) asparagine glycan is attached at Asn12. The chain crosses the membrane as a helical span at residues 34-58; the sequence is YAMLGAYMFFLIIVGFPVNFMTLYV. Over 59 to 70 the chain is Cytoplasmic; that stretch reads TLEHKKLRTPLN. A helical membrane pass occupies residues 71–93; sequence YILLNLAVADLFMVIGGFTTTIY. The Extracellular segment spans residues 94–107; it reads TSMHGYFVLGRLGC. A disulfide bridge connects residues Cys107 and Cys184. A helical membrane pass occupies residues 108 to 130; sequence NIEGFFATLGGMISLWSLAVLAI. Residues 131–133 carry the 'Ionic lock' involved in activated form stabilization motif; the sequence is ERW. At 131 to 149 the chain is on the cytoplasmic side; sequence ERWVVVCKPISNFRFGENH. The helical transmembrane segment at 150-170 threads the bilayer; sequence AIMGVSLTWAMALACTVPPLV. Topologically, residues 171-199 are extracellular; that stretch reads GWSRYIPEGMQCSCGIDYYTRAEGFNNES. N-linked (GlcNAc...) asparagine glycosylation is present at Asn197. Residues 200–221 traverse the membrane as a helical segment; that stretch reads FVLYMFFCHFTIPLTIIFFCYG. Topologically, residues 222–249 are cytoplasmic; it reads RLLCAVKEAAAAQQESETTQRAEREVTR. The helical transmembrane segment at 250 to 271 threads the bilayer; that stretch reads MVIIMVIGFLICWLPYASVAWF. Over 272–283 the chain is Extracellular; it reads IFTHQGSEFGPL. A helical membrane pass occupies residues 284–305; sequence FMTIPAFFAKSSSIYNPMIYIC. Residue Lys293 is modified to N6-(retinylidene)lysine. Over 306-348 the chain is Cytoplasmic; it reads MNKQFRHCMITTLFCGKNPFEGEEEGASSTKTEASSASSVSPA. A lipid anchor (S-palmitoyl cysteine) is attached at Cys320. Residues 327–348 form a disordered region; that stretch reads GEEEGASSTKTEASSASSVSPA. Residues 332–348 show a composition bias toward low complexity; that stretch reads ASSTKTEASSASSVSPA.

Belongs to the G-protein coupled receptor 1 family. Opsin subfamily. In terms of processing, phosphorylated on some or all of the serine and threonine residues present in the C-terminal region. Contains one covalently linked retinal chromophore.

It localises to the membrane. The protein localises to the cell projection. The protein resides in the cilium. Its subcellular location is the photoreceptor outer segment. Functionally, photoreceptor required for image-forming vision at low light intensity. While most salt water fish species use retinal as chromophore, most freshwater fish use 3-dehydroretinal, or a mixture of retinal and 3-dehydroretinal. Light-induced isomerization of 11-cis to all-trans retinal triggers a conformational change that activates signaling via G-proteins. Subsequent receptor phosphorylation mediates displacement of the bound G-protein alpha subunit by arrestin and terminates signaling. The sequence is that of Rhodopsin (rho) from Sargocentron microstoma (Smallmouth squirrelfish).